We begin with the raw amino-acid sequence, 311 residues long: Salutaridine reductase (311 aa).

17–40 (VTGGNKGIGFEICKQLSSSGIMVV) is an NADP(+) binding site. Serine 180 serves as a coordination point for substrate. Residue tyrosine 236 is the Proton acceptor of the active site.

It belongs to the short-chain dehydrogenases/reductases (SDR) family.

The enzyme catalyses (7S)-salutaridinol + NADP(+) = salutaridine + NADPH + H(+). Subject to substrate inhibition at salutaridine concentrations higher than 20 to 30 uM. Functionally, involved in biosynthesis of morphinan-type benzylisoquinoline alkaloids. Catalyzes the stereospecific conversion of salutaridine to salutaridinol. In Papaver bracteatum (Great scarlet poppy), this protein is Salutaridine reductase.